Consider the following 267-residue polypeptide: MRLIPLQTSEQVSRWAARHIVERINRFQPTADRPFVLGLPTGGTPLQTYKELIRLYQAGEVSFQHVVTFNMDEYVGLPKEHPQSYHTFMYRNFFDHIDIQPQNINILNGNTEDHDAECRRYEEKIKSYGKIHLFMGGVGVDGHIAFNEPASSLGSRTRIKTLTEDTLIANSRFFDNDITKVPKYALTVGVATLLDAEEVMLLITGYNKALALQACVEGSVNHMWTVSALQLHKRGIVVCDEPATQELKVKTVKYFTQLETQAIQSVL.

Residue D72 is the Proton acceptor; for enolization step of the active site. The active-site For ring-opening step is D141. Residue H143 is the Proton acceptor; for ring-opening step of the active site. E148 functions as the For ring-opening step in the catalytic mechanism.

The protein belongs to the glucosamine/galactosamine-6-phosphate isomerase family. NagB subfamily. Homohexamer.

The catalysed reaction is alpha-D-glucosamine 6-phosphate + H2O = beta-D-fructose 6-phosphate + NH4(+). It functions in the pathway amino-sugar metabolism; N-acetylneuraminate degradation; D-fructose 6-phosphate from N-acetylneuraminate: step 5/5. With respect to regulation, allosterically activated by N-acetylglucosamine 6-phosphate (GlcNAc6P). Its function is as follows. Catalyzes the reversible isomerization-deamination of glucosamine 6-phosphate (GlcN6P) to form fructose 6-phosphate (Fru6P) and ammonium ion. The sequence is that of Glucosamine-6-phosphate deaminase from Actinobacillus pleuropneumoniae serotype 5b (strain L20).